Here is a 467-residue protein sequence, read N- to C-terminus: Nodulation protein T (467 aa).

Positions 1 to 17 (MRFTRYTTPFFSLLLSG) are cleaved as a signal peptide. Cysteine 18 is lipidated: N-palmitoyl cysteine. The S-diacylglycerol cysteine moiety is linked to residue cysteine 18.

It belongs to the outer membrane factor (OMF) (TC 1.B.17) family.

Its subcellular location is the cell membrane. The chain is Nodulation protein T (nodT) from Rhizobium leguminosarum bv. trifolii.